Here is a 161-residue protein sequence, read N- to C-terminus: ATP synthase subunit b (161 aa).

A helical transmembrane segment spans residues 11–31; sequence AISFVLFVWFCMKYIWPPIIL.

It belongs to the ATPase B chain family. As to quaternary structure, F-type ATPases have 2 components, F(1) - the catalytic core - and F(0) - the membrane proton channel. F(1) has five subunits: alpha(3), beta(3), gamma(1), delta(1), epsilon(1). F(0) has three main subunits: a(1), b(2) and c(10-14). The alpha and beta chains form an alternating ring which encloses part of the gamma chain. F(1) is attached to F(0) by a central stalk formed by the gamma and epsilon chains, while a peripheral stalk is formed by the delta and b chains.

It is found in the cell membrane. F(1)F(0) ATP synthase produces ATP from ADP in the presence of a proton or sodium gradient. F-type ATPases consist of two structural domains, F(1) containing the extramembraneous catalytic core and F(0) containing the membrane proton channel, linked together by a central stalk and a peripheral stalk. During catalysis, ATP synthesis in the catalytic domain of F(1) is coupled via a rotary mechanism of the central stalk subunits to proton translocation. Its function is as follows. Component of the F(0) channel, it forms part of the peripheral stalk, linking F(1) to F(0). This Buchnera aphidicola subsp. Acyrthosiphon pisum (strain APS) (Acyrthosiphon pisum symbiotic bacterium) protein is ATP synthase subunit b.